The primary structure comprises 161 residues: UPF0178 protein BR1979/BS1330_I1973 (161 aa).

The protein belongs to the UPF0178 family.

The sequence is that of UPF0178 protein BR1979/BS1330_I1973 from Brucella suis biovar 1 (strain 1330).